The chain runs to 516 residues: Serine carboxypeptidase II-3 (516 aa).

The first 20 residues, 1–20 (MKCTVVALVLLVAVQCLVLG), serve as a signal peptide directing secretion. The propeptide occupies 21–77 (AGPAAAAKARRTRQGDYLNRLRGSPSSRASWESLAAVEEQTTTKAAGRPAPVAAAVE). Cystine bridges form between Cys-143–Cys-391, Cys-300–Cys-315, and Cys-339–Cys-359. Residues Asn-194 and Asn-205 are each glycosylated (N-linked (GlcNAc...) asparagine). Ser-236 is an active-site residue. Residue Asn-301 is glycosylated (N-linked (GlcNAc...) asparagine). Residues 342-352 (EKLVTPPIAPS) constitute a propeptide, linker peptide. The N-linked (GlcNAc...) asparagine glycan is linked to Asn-380. Active-site residues include Asp-427 and His-484.

The protein belongs to the peptidase S10 family. Carboxypeptidase II is a dimer, where each monomer is composed of two chains linked by a disulfide bond. In terms of processing, the linker peptide is endoproteolytically excised during enzyme maturation.

The catalysed reaction is Preferential release of a C-terminal arginine or lysine residue.. The chain is Serine carboxypeptidase II-3 (CXP;2-3) from Hordeum vulgare (Barley).